The primary structure comprises 351 residues: Biotin synthase (351 aa).

A Radical SAM core domain is found at 44-262 (NRVQVSTLLS…LAVARIMMPK (219 aa)). [4Fe-4S] cluster is bound by residues Cys59, Cys63, and Cys66. The [2Fe-2S] cluster site is built by Cys103, Cys134, Cys194, and Arg266.

It belongs to the radical SAM superfamily. Biotin synthase family. Homodimer. [4Fe-4S] cluster serves as cofactor. The cofactor is [2Fe-2S] cluster.

It carries out the reaction (4R,5S)-dethiobiotin + (sulfur carrier)-SH + 2 reduced [2Fe-2S]-[ferredoxin] + 2 S-adenosyl-L-methionine = (sulfur carrier)-H + biotin + 2 5'-deoxyadenosine + 2 L-methionine + 2 oxidized [2Fe-2S]-[ferredoxin]. The protein operates within cofactor biosynthesis; biotin biosynthesis; biotin from 7,8-diaminononanoate: step 2/2. Its function is as follows. Catalyzes the conversion of dethiobiotin (DTB) to biotin by the insertion of a sulfur atom into dethiobiotin via a radical-based mechanism. The polypeptide is Biotin synthase (Stutzerimonas stutzeri (strain A1501) (Pseudomonas stutzeri)).